Reading from the N-terminus, the 78-residue chain is Conotoxin TsMSGL-13 (78 aa).

The first 24 residues, 1–24, serve as a signal peptide directing secretion; the sequence is MSGLGIMVLTLLLFMFMATSHQDA. Positions 25–44 are excised as a propeptide; it reads GEKQATQRDAINVRRRRSIT. 3 cysteine pairs are disulfide-bonded: cysteine 51-cysteine 63, cysteine 55-cysteine 72, and cysteine 62-cysteine 76. At phenylalanine 77 the chain carries Phenylalanine amide.

Belongs to the conotoxin O3 superfamily. Expressed by the venom duct.

It is found in the secreted. This is Conotoxin TsMSGL-13 from Conus tessulatus (Tessellate cone).